A 98-amino-acid chain; its full sequence is Integration host factor subunit alpha (98 aa).

The interval 49-71 (FGNFDLRDKNQRPGRNPKTGEDI) is disordered.

It belongs to the bacterial histone-like protein family. In terms of assembly, heterodimer of an alpha and a beta chain.

Functionally, this protein is one of the two subunits of integration host factor, a specific DNA-binding protein that functions in genetic recombination as well as in transcriptional and translational control. The protein is Integration host factor subunit alpha of Edwardsiella ictaluri (strain 93-146).